The chain runs to 250 residues: DNA repair protein RecO (250 aa).

Belongs to the RecO family.

Functionally, involved in DNA repair and RecF pathway recombination. This chain is DNA repair protein RecO, found in Syntrophomonas wolfei subsp. wolfei (strain DSM 2245B / Goettingen).